The following is a 421-amino-acid chain: MGMTMTQKILAAHANLPEVKAGQLIEANLDLVLANDITGPVAIHEIQRLKKKTVFDKDKIALVPDHFTPNKDIKSAEHCKCVREFAKEHDITNYFEIGEMGIEHALLPEKGLIVAGETCIGADSHTCTYGALGAFSTGVGSTDMGAGMITGKAWFKVPAAIKFILTGEPKEWVSGKDVILHIIGMIGVDGALYKSMEFVGAGIKNLTMDDRFTIANMAIEAGAKNGIFPVDDLTISYMKEHGAKPYTIYEADEDAEYEQIITINLSELEPTVAFPHLPENTKTVKEAGEVRIDQVVIGSCTNGRIGDLRIAAKVLEGRKVAKGMRAIVFPATQAIYLQAIEEGLIQTFIKAGCVVSTPTCGPCLGGHMGILAAGERAASTTNRNFVGRMGHVESEVYLCSPAVAAASAVTGKISEPSELFS.

Residues Cys300, Cys360, and Cys363 each coordinate [4Fe-4S] cluster.

This sequence belongs to the aconitase/IPM isomerase family. LeuC type 2 subfamily. As to quaternary structure, heterodimer of LeuC and LeuD. [4Fe-4S] cluster serves as cofactor.

It catalyses the reaction (2R,3S)-3-isopropylmalate = (2S)-2-isopropylmalate. The protein operates within amino-acid biosynthesis; L-leucine biosynthesis; L-leucine from 3-methyl-2-oxobutanoate: step 2/4. Functionally, catalyzes the isomerization between 2-isopropylmalate and 3-isopropylmalate, via the formation of 2-isopropylmaleate. In Lachnoclostridium phytofermentans (strain ATCC 700394 / DSM 18823 / ISDg) (Clostridium phytofermentans), this protein is 3-isopropylmalate dehydratase large subunit.